A 660-amino-acid polypeptide reads, in one-letter code: uncharacterized protein (660 aa).

The disordered stretch occupies residues 220–239; that stretch reads ADARGQAAAPPQAQAPAPPD. Positions 222 to 239 are enriched in low complexity; it reads ARGQAAAPPQAQAPAPPD.

This is an uncharacterized protein from Callospermophilus lateralis (Golden-mantled ground squirrel).